Reading from the N-terminus, the 281-residue chain is ATP phosphoribosyltransferase (281 aa).

Belongs to the ATP phosphoribosyltransferase family. Long subfamily. It depends on Mg(2+) as a cofactor.

Its subcellular location is the cytoplasm. The enzyme catalyses 1-(5-phospho-beta-D-ribosyl)-ATP + diphosphate = 5-phospho-alpha-D-ribose 1-diphosphate + ATP. The protein operates within amino-acid biosynthesis; L-histidine biosynthesis; L-histidine from 5-phospho-alpha-D-ribose 1-diphosphate: step 1/9. Feedback inhibited by histidine. Functionally, catalyzes the condensation of ATP and 5-phosphoribose 1-diphosphate to form N'-(5'-phosphoribosyl)-ATP (PR-ATP). Has a crucial role in the pathway because the rate of histidine biosynthesis seems to be controlled primarily by regulation of HisG enzymatic activity. The chain is ATP phosphoribosyltransferase from Corynebacterium jeikeium (strain K411).